Here is a 36-residue protein sequence, read N- to C-terminus: Photosystem I reaction center subunit VIII (36 aa).

The chain crosses the membrane as a helical span at residues 8–28 (SVLVPLVGLVFPAIAMASLFL).

It belongs to the PsaI family.

It localises to the plastid. The protein resides in the chloroplast thylakoid membrane. May help in the organization of the PsaL subunit. This Helianthus annuus (Common sunflower) protein is Photosystem I reaction center subunit VIII.